The chain runs to 493 residues: 3-octaprenyl-4-hydroxybenzoate carboxy-lyase (493 aa).

Residue N177 participates in Mn(2+) binding. Prenylated FMN contacts are provided by residues 180–182 (IYR), 194–196 (RWL), and 199–200 (RG). A Mn(2+)-binding site is contributed by E243. The active-site Proton donor is D292.

It belongs to the UbiD family. In terms of assembly, homohexamer. Prenylated FMN serves as cofactor. The cofactor is Mn(2+).

The protein localises to the cell membrane. It catalyses the reaction a 4-hydroxy-3-(all-trans-polyprenyl)benzoate + H(+) = a 2-(all-trans-polyprenyl)phenol + CO2. It participates in cofactor biosynthesis; ubiquinone biosynthesis. In terms of biological role, catalyzes the decarboxylation of 3-octaprenyl-4-hydroxy benzoate to 2-octaprenylphenol, an intermediate step in ubiquinone biosynthesis. In Colwellia psychrerythraea (strain 34H / ATCC BAA-681) (Vibrio psychroerythus), this protein is 3-octaprenyl-4-hydroxybenzoate carboxy-lyase.